A 262-amino-acid chain; its full sequence is Tryptophan synthase alpha chain (262 aa).

Active-site proton acceptor residues include Glu49 and Asp60.

It belongs to the TrpA family. In terms of assembly, tetramer of two alpha and two beta chains.

It carries out the reaction (1S,2R)-1-C-(indol-3-yl)glycerol 3-phosphate + L-serine = D-glyceraldehyde 3-phosphate + L-tryptophan + H2O. Its pathway is amino-acid biosynthesis; L-tryptophan biosynthesis; L-tryptophan from chorismate: step 5/5. Functionally, the alpha subunit is responsible for the aldol cleavage of indoleglycerol phosphate to indole and glyceraldehyde 3-phosphate. This is Tryptophan synthase alpha chain from Thermoanaerobacter sp. (strain X514).